The following is a 213-amino-acid chain: Negative modulator of initiation of replication (213 aa).

Interaction with DNA stretches follow at residues 116-117 (AV), 145-149 (RTRVY), and 179-185 (NTNSGRK).

The protein belongs to the SeqA family. In terms of assembly, homodimer. Polymerizes to form helical filaments.

Its subcellular location is the cytoplasm. Negative regulator of replication initiation, which contributes to regulation of DNA replication and ensures that replication initiation occurs exactly once per chromosome per cell cycle. Binds to pairs of hemimethylated GATC sequences in the oriC region, thus preventing assembly of replication proteins and re-initiation at newly replicated origins. Repression is relieved when the region becomes fully methylated. The polypeptide is Negative modulator of initiation of replication (Haemophilus parainfluenzae (strain T3T1)).